The following is a 279-amino-acid chain: Shikimate dehydrogenase (NADP(+)) (279 aa).

Shikimate contacts are provided by residues Ser-21–Ser-23 and Thr-68. Lys-72 functions as the Proton acceptor in the catalytic mechanism. Residues Asn-93 and Asp-108 each coordinate shikimate. Residues Gly-130–Ala-134 and Leu-219 contribute to the NADP(+) site. Tyr-221 contacts shikimate. Residue Gly-242 coordinates NADP(+).

Belongs to the shikimate dehydrogenase family. In terms of assembly, homodimer.

It carries out the reaction shikimate + NADP(+) = 3-dehydroshikimate + NADPH + H(+). Its pathway is metabolic intermediate biosynthesis; chorismate biosynthesis; chorismate from D-erythrose 4-phosphate and phosphoenolpyruvate: step 4/7. Its function is as follows. Involved in the biosynthesis of the chorismate, which leads to the biosynthesis of aromatic amino acids. Catalyzes the reversible NADPH linked reduction of 3-dehydroshikimate (DHSA) to yield shikimate (SA). This chain is Shikimate dehydrogenase (NADP(+)), found in Oleidesulfovibrio alaskensis (strain ATCC BAA-1058 / DSM 17464 / G20) (Desulfovibrio alaskensis).